The sequence spans 121 residues: Fluoride-specific ion channel FluC (121 aa).

A run of 4 helical transmembrane segments spans residues 5-25 (LLIFLGGGTGSVLRYLLTISI), 33-53 (FPWGTFAVNILGCILIGVFYT), 66-83 (LMLTIGLCGGFTTFSTFS), and 98-118 (FFTYIIGSVVLGILGVMLGIW). Na(+) is bound by residues glycine 74 and threonine 77.

This sequence belongs to the fluoride channel Fluc/FEX (TC 1.A.43) family.

The protein resides in the cell inner membrane. It carries out the reaction fluoride(in) = fluoride(out). Its activity is regulated as follows. Na(+) is not transported, but it plays an essential structural role and its presence is essential for fluoride channel function. In terms of biological role, fluoride-specific ion channel. Important for reducing fluoride concentration in the cell, thus reducing its toxicity. In Phocaeicola vulgatus (strain ATCC 8482 / DSM 1447 / JCM 5826 / CCUG 4940 / NBRC 14291 / NCTC 11154) (Bacteroides vulgatus), this protein is Fluoride-specific ion channel FluC.